The primary structure comprises 620 residues: MSQHKNSVGLLVSAVGVVFGDIGTSPLYAMKETFAGHHPIMVSPENIFGVLSLVFWTVMLLVTVKYVILIMRADNHGEGGSLALLALVTELTRGRRVHYPLMLLGVIAAALFYGDSMITPAISVLSAVEGLEVVTPDLKAYVVPITALVLTGLFAIQSRGTALVGRLFGPVMCLWFVTLALLGIANIVRAPEVLEAISPTFAIEFVIRHPLMSFYALGTVVLAVTGGEALYTDMGHFGRFPIRLGWFSLVLPALLLNYFGQGALLIADPAAIQNPFFRMGPEWMVMPMVALATLATVIASQAVISGAFSVARQAIQLGLLPRMTIVHTSGEEAGQIYVPFTNWTLYFAVMALVIGFQSSSNLAAAYGIAVTGTMMIDTILVSFVMALLWRWNMALVIVVAGTLLLVDFAYFAANIIKVAQGGWFPLFIGFISFTVLTTWRRGRALVRKQLKKQAVPLDVVLRALGPNVSRARGTAVFLTAATDGVPPALLHNLKHNQTVHQRVVLATVTTAETPYVPDSERVHMTDIGDGFHRLIIRYGFMQTPDIPAALTLCKQFGHEFNMMSTSFFLSRETFVPSLNPGMALWRERLFTFMTLNATRATTFFKIPTDRVVELGTQLEI.

12 helical membrane passes run 8–28 (VGLL…SPLY), 50–70 (VLSL…VILI), 102–122 (MLLG…TPAI), 136–156 (PDLK…LFAI), 168–188 (FGPV…ANIV), 211–231 (LMSF…EALY), 246–266 (WFSL…ALLI), 284–304 (MVMP…QAVI), 336–356 (IYVP…VIGF), 368–388 (IAVT…MALL), 393–413 (MALV…YFAA), and 415–435 (IIKV…SFTV).

Belongs to the HAK/KUP transporter (TC 2.A.72) family.

The protein localises to the cell inner membrane. The catalysed reaction is K(+)(in) + H(+)(in) = K(+)(out) + H(+)(out). Functionally, transport of potassium into the cell. Likely operates as a K(+):H(+) symporter. In Rhodopseudomonas palustris (strain HaA2), this protein is Probable potassium transport system protein Kup.